The sequence spans 85 residues: Conotoxin MaIr94 (85 aa).

A signal peptide spans 1–22 (MKLTCVLIITVLFLTACQLTAA). The propeptide occupies 23–49 (GNSRDKQEDPVVRSSGEVQRSEDIKLA). Intrachain disulfides connect cysteine 52-cysteine 69, cysteine 59-cysteine 73, and cysteine 68-cysteine 84.

Belongs to the conotoxin O1 superfamily. Expressed by the venom duct.

It localises to the secreted. Functionally, produces no obvious effect on ionic currents when tested on the mouse dorsal rooted ganglia (DRG). This is Conotoxin MaIr94 from Conus marmoreus (Marble cone).